Consider the following 225-residue polypeptide: Glutathione S-transferase U2 (225 aa).

A GST N-terminal domain is found at 6-85; sequence ESVKLLGFWI…YIDQTWNNNP (80 aa). Residues 16–17, 42–43, 56–57, and 69–70 contribute to the glutathione site; these read SP, KK, KV, and ES. The 128-residue stretch at 90-217 folds into the GST C-terminal domain; that stretch reads DPYEKAMVRF…EKHIERMKKI (128 aa). Position 151 is a phosphothreonine (threonine 151).

It belongs to the GST superfamily. Tau family.

The protein localises to the cytoplasm. The protein resides in the cytosol. The enzyme catalyses RX + glutathione = an S-substituted glutathione + a halide anion + H(+). May be involved in the conjugation of reduced glutathione to a wide number of exogenous and endogenous hydrophobic electrophiles and have a detoxification role against certain herbicides. The sequence is that of Glutathione S-transferase U2 (GSTU2) from Arabidopsis thaliana (Mouse-ear cress).